Reading from the N-terminus, the 804-residue chain is Leucine--tRNA ligase (804 aa).

Positions 39–50 (PFPSGKGLHVGH) match the 'HIGH' region motif. A 'KMSKS' region motif is present at residues 573 to 577 (KMSKS). Lysine 576 serves as a coordination point for ATP.

This sequence belongs to the class-I aminoacyl-tRNA synthetase family.

The protein localises to the cytoplasm. The catalysed reaction is tRNA(Leu) + L-leucine + ATP = L-leucyl-tRNA(Leu) + AMP + diphosphate. The sequence is that of Leucine--tRNA ligase from Lactobacillus johnsonii (strain CNCM I-12250 / La1 / NCC 533).